We begin with the raw amino-acid sequence, 785 residues long: Altered inheritance of mitochondria protein 3-2 (785 aa).

Disordered stretches follow at residues 33-122 (TGYQ…QPYM), 142-406 (QQVA…SENL), and 418-785 (NVDV…RLHK). Over residues 91–102 (GSSGNSANGSSA) the composition is skewed to low complexity. Polar residues-rich tracts occupy residues 103 to 122 (TIPT…QPYM) and 143 to 199 (QVAT…QLNI). Positions 249 to 260 (KPYDWEEQKTTK) are enriched in basic and acidic residues. Polar residues-rich tracts occupy residues 283-310 (SRQG…TTTG), 350-366 (ATNN…QNTK), 375-388 (TNKS…SNVM), 395-405 (QMNTKANSSEN), and 455-465 (SSISRDNYNSI). A compositionally biased stretch (basic and acidic residues) spans 478–497 (NTGEREGAQELKADIAERSQ). The span at 527 to 556 (AQTSSDIPQKSSLVTDESNISVPNKSQQPM) shows a compositional bias: polar residues. Composition is skewed to basic and acidic residues over residues 587 to 613 (KSLE…EQLK) and 624 to 637 (KNMK…DNKN). Positions 659–671 (SLTSEGNHMNLNT) are enriched in polar residues. Basic and acidic residues-rich tracts occupy residues 672–686 (EKGK…DESK) and 700–710 (FKREELSKEVV).

This sequence belongs to the AIM3 family.

The protein localises to the membrane raft. This chain is Altered inheritance of mitochondria protein 3-2 (AIM3-2), found in Candida glabrata (strain ATCC 2001 / BCRC 20586 / JCM 3761 / NBRC 0622 / NRRL Y-65 / CBS 138) (Yeast).